Reading from the N-terminus, the 527-residue chain is Peptide chain release factor 3 (527 aa).

The 268-residue stretch at 11 to 278 (AKRRTFAIIS…GFVEWAPAPL (268 aa)) folds into the tr-type G domain. GTP is bound by residues 20-27 (SHPDAGKT), 87-91 (DTPGH), and 141-144 (NKMD).

It belongs to the TRAFAC class translation factor GTPase superfamily. Classic translation factor GTPase family. PrfC subfamily.

It localises to the cytoplasm. Its function is as follows. Increases the formation of ribosomal termination complexes and stimulates activities of RF-1 and RF-2. It binds guanine nucleotides and has strong preference for UGA stop codons. It may interact directly with the ribosome. The stimulation of RF-1 and RF-2 is significantly reduced by GTP and GDP, but not by GMP. This is Peptide chain release factor 3 from Teredinibacter turnerae (strain ATCC 39867 / T7901).